The chain runs to 320 residues: Lipoyl synthase (320 aa).

[4Fe-4S] cluster is bound by residues Cys-67, Cys-72, Cys-78, Cys-93, Cys-97, Cys-100, and Ser-307. One can recognise a Radical SAM core domain in the interval 79–296 (FNHGTATFMI…RTKAEVMGFE (218 aa)).

Belongs to the radical SAM superfamily. Lipoyl synthase family. Requires [4Fe-4S] cluster as cofactor.

It localises to the cytoplasm. It catalyses the reaction [[Fe-S] cluster scaffold protein carrying a second [4Fe-4S](2+) cluster] + N(6)-octanoyl-L-lysyl-[protein] + 2 oxidized [2Fe-2S]-[ferredoxin] + 2 S-adenosyl-L-methionine + 4 H(+) = [[Fe-S] cluster scaffold protein] + N(6)-[(R)-dihydrolipoyl]-L-lysyl-[protein] + 4 Fe(3+) + 2 hydrogen sulfide + 2 5'-deoxyadenosine + 2 L-methionine + 2 reduced [2Fe-2S]-[ferredoxin]. It functions in the pathway protein modification; protein lipoylation via endogenous pathway; protein N(6)-(lipoyl)lysine from octanoyl-[acyl-carrier-protein]: step 2/2. Catalyzes the radical-mediated insertion of two sulfur atoms into the C-6 and C-8 positions of the octanoyl moiety bound to the lipoyl domains of lipoate-dependent enzymes, thereby converting the octanoylated domains into lipoylated derivatives. In Mannheimia succiniciproducens (strain KCTC 0769BP / MBEL55E), this protein is Lipoyl synthase.